A 302-amino-acid chain; its full sequence is Methionyl-tRNA formyltransferase (302 aa).

108 to 111 (SLLP) serves as a coordination point for (6S)-5,6,7,8-tetrahydrofolate. The span at 276–288 (REGKRPMEPEEFL) shows a compositional bias: basic and acidic residues. The segment at 276-302 (REGKRPMEPEEFLRGFPLPEGSRAHTA) is disordered.

This sequence belongs to the Fmt family.

It carries out the reaction L-methionyl-tRNA(fMet) + (6R)-10-formyltetrahydrofolate = N-formyl-L-methionyl-tRNA(fMet) + (6S)-5,6,7,8-tetrahydrofolate + H(+). Functionally, attaches a formyl group to the free amino group of methionyl-tRNA(fMet). The formyl group appears to play a dual role in the initiator identity of N-formylmethionyl-tRNA by promoting its recognition by IF2 and preventing the misappropriation of this tRNA by the elongation apparatus. The protein is Methionyl-tRNA formyltransferase of Cereibacter sphaeroides (strain ATCC 17029 / ATH 2.4.9) (Rhodobacter sphaeroides).